Consider the following 322-residue polypeptide: Ribose-phosphate pyrophosphokinase 1 (322 aa).

ATP is bound by residues 39 to 41 and 98 to 99; these read DGE and RQ. Mg(2+) contacts are provided by His-132 and Asp-173. Lys-196 is an active-site residue. Residues Arg-198, Asp-224, and 228-232 each bind D-ribose 5-phosphate; that span reads DTAGT.

It belongs to the ribose-phosphate pyrophosphokinase family. Class I subfamily. As to quaternary structure, homohexamer. Mg(2+) serves as cofactor.

It is found in the cytoplasm. The enzyme catalyses D-ribose 5-phosphate + ATP = 5-phospho-alpha-D-ribose 1-diphosphate + AMP + H(+). It participates in metabolic intermediate biosynthesis; 5-phospho-alpha-D-ribose 1-diphosphate biosynthesis; 5-phospho-alpha-D-ribose 1-diphosphate from D-ribose 5-phosphate (route I): step 1/1. In terms of biological role, involved in the biosynthesis of the central metabolite phospho-alpha-D-ribosyl-1-pyrophosphate (PRPP) via the transfer of pyrophosphoryl group from ATP to 1-hydroxyl of ribose-5-phosphate (Rib-5-P). This is Ribose-phosphate pyrophosphokinase 1 from Streptococcus mutans serotype c (strain ATCC 700610 / UA159).